The sequence spans 284 residues: Pantothenate synthetase (284 aa).

Residue 30–37 (MGNLHDGH) participates in ATP binding. H37 acts as the Proton donor in catalysis. Position 61 (Q61) interacts with (R)-pantoate. Q61 contributes to the beta-alanine binding site. 149 to 152 (GEKD) contributes to the ATP binding site. Residue Q155 participates in (R)-pantoate binding. Residues V178 and 186-189 (LSSR) contribute to the ATP site.

The protein belongs to the pantothenate synthetase family. As to quaternary structure, homodimer.

The protein localises to the cytoplasm. The catalysed reaction is (R)-pantoate + beta-alanine + ATP = (R)-pantothenate + AMP + diphosphate + H(+). Its pathway is cofactor biosynthesis; (R)-pantothenate biosynthesis; (R)-pantothenate from (R)-pantoate and beta-alanine: step 1/1. Its function is as follows. Catalyzes the condensation of pantoate with beta-alanine in an ATP-dependent reaction via a pantoyl-adenylate intermediate. This Photorhabdus laumondii subsp. laumondii (strain DSM 15139 / CIP 105565 / TT01) (Photorhabdus luminescens subsp. laumondii) protein is Pantothenate synthetase.